The sequence spans 114 residues: DNA-directed RNA polymerase subunit Rpo4 (114 aa).

It belongs to the eukaryotic RPB4 RNA polymerase subunit family. As to quaternary structure, part of the 13-subunit RNA polymerase complex. Forms a stalk with Rpo7 that extends from the main structure. In purified enzyme appears as 5 forms, each differing by about 200 Da of a covalently bound, negatively charged residue. Not glycosylated.

It localises to the cytoplasm. It catalyses the reaction RNA(n) + a ribonucleoside 5'-triphosphate = RNA(n+1) + diphosphate. In terms of biological role, DNA-dependent RNA polymerase catalyzes the transcription of DNA into RNA using the four ribonucleoside triphosphates as substrates. This subunit is less well bound than the others. Probably not involved in transcription initiation. In Sulfolobus acidocaldarius (strain ATCC 33909 / DSM 639 / JCM 8929 / NBRC 15157 / NCIMB 11770), this protein is DNA-directed RNA polymerase subunit Rpo4.